The chain runs to 239 residues: Fatty acid metabolism regulator protein (239 aa).

The 69-residue stretch at 6 to 74 (KGPASFAEKY…HGKPTQVNNF (69 aa)) folds into the HTH gntR-type domain. Residues 34-53 (ERELSELIGVTRTTLREVLQ) constitute a DNA-binding region (H-T-H motif).

Homodimer.

Its subcellular location is the cytoplasm. Multifunctional regulator of fatty acid metabolism. This Shewanella denitrificans (strain OS217 / ATCC BAA-1090 / DSM 15013) protein is Fatty acid metabolism regulator protein.